Here is a 506-residue protein sequence, read N- to C-terminus: Protein MGF 505-4R (506 aa).

This sequence belongs to the asfivirus MGF 505 family.

Its function is as follows. Plays a role in virus cell tropism, and may be required for efficient virus replication in macrophages. The polypeptide is Protein MGF 505-4R (Ornithodoros (relapsing fever ticks)).